Here is a 125-residue protein sequence, read N- to C-terminus: Kappa-casein (125 aa).

The tract at residues 42–63 (LPNIDPPTVERRPRPRPSFIAI) is disordered. The O-linked (GalNAc...) threonine glycan is linked to T97. Position 104 is a phosphoserine; alternate (S104). A glycan (O-linked (GalNAc...) serine; alternate) is linked at S104. Residue T121 is glycosylated (O-linked (GalNAc...) threonine). S122 bears the Phosphoserine mark.

The protein belongs to the kappa-casein family. As to expression, mammary gland specific. Secreted in milk.

Its subcellular location is the secreted. In terms of biological role, kappa-casein stabilizes micelle formation, preventing casein precipitation in milk. This Lama guanicoe (Guanaco) protein is Kappa-casein (CSN3).